Consider the following 394-residue polypeptide: NAD(P)H-quinone oxidoreductase subunit H 2 (394 aa).

This sequence belongs to the complex I 49 kDa subunit family. NDH-1 can be composed of about 15 different subunits; different subcomplexes with different compositions have been identified which probably have different functions.

It is found in the cell inner membrane. The enzyme catalyses a plastoquinone + NADH + (n+1) H(+)(in) = a plastoquinol + NAD(+) + n H(+)(out). The catalysed reaction is a plastoquinone + NADPH + (n+1) H(+)(in) = a plastoquinol + NADP(+) + n H(+)(out). In terms of biological role, NDH-1 shuttles electrons from an unknown electron donor, via FMN and iron-sulfur (Fe-S) centers, to quinones in the respiratory and/or the photosynthetic chain. The immediate electron acceptor for the enzyme in this species is believed to be plastoquinone. Couples the redox reaction to proton translocation, and thus conserves the redox energy in a proton gradient. Cyanobacterial NDH-1 also plays a role in inorganic carbon-concentration. This chain is NAD(P)H-quinone oxidoreductase subunit H 2, found in Gloeobacter violaceus (strain ATCC 29082 / PCC 7421).